We begin with the raw amino-acid sequence, 226 residues long: MSSWPPRVVIRRSAGLRTMESALARTGLGPVAGVDEAGRGACAGPLVIAACVLAPKPQAALARLDDSKKLTERAREELFPAIKRLALAWSVVSVPAAEVDQIGIHVANIEGMRRAVAGLDLEPGYVLTDGFRVPGLTAPSLPVIGGDGAAACIAAASVLAKVTRDRVMTEMDETHPGYGFAIHKGYSTPLHMDALDELGPCPEHRMTYANVVAAGVRLEQRAGRTG.

The 192-residue stretch at 29–220 folds into the RNase H type-2 domain; it reads GPVAGVDEAG…VVAAGVRLEQ (192 aa). Asp35, Glu36, and Asp129 together coordinate a divalent metal cation.

The protein belongs to the RNase HII family. It depends on Mn(2+) as a cofactor. Mg(2+) serves as cofactor.

It localises to the cytoplasm. The enzyme catalyses Endonucleolytic cleavage to 5'-phosphomonoester.. Functionally, endonuclease that specifically degrades the RNA of RNA-DNA hybrids. The protein is Ribonuclease HII of Rhodococcus erythropolis (strain PR4 / NBRC 100887).